A 348-amino-acid polypeptide reads, in one-letter code: Isopentenyl-diphosphate delta-isomerase (348 aa).

Substrate is bound at residue R9 to K10. Residues A68–T70, S98, and N127 contribute to the FMN site. Q157 contacts substrate. Mg(2+) is bound at residue E158. Residues K188, S213, T218, and A286–G287 contribute to the FMN site.

Belongs to the IPP isomerase type 2 family. Homooctamer. Dimer of tetramers. FMN is required as a cofactor. Requires NADPH as cofactor. It depends on Mg(2+) as a cofactor.

It is found in the cytoplasm. The enzyme catalyses isopentenyl diphosphate = dimethylallyl diphosphate. Functionally, involved in the biosynthesis of isoprenoids. Catalyzes the 1,3-allylic rearrangement of the homoallylic substrate isopentenyl (IPP) to its allylic isomer, dimethylallyl diphosphate (DMAPP). This chain is Isopentenyl-diphosphate delta-isomerase, found in Limosilactobacillus reuteri (strain DSM 20016) (Lactobacillus reuteri).